Here is a 380-residue protein sequence, read N- to C-terminus: Succinate--CoA ligase [ADP-forming] subunit beta 2 (380 aa).

Residues 9-235 (KQIFSKHGIR…YTEADQMERI (227 aa)) enclose the ATP-grasp domain. Residues Lys45, 52–54 (GRG), Glu91, Ile94, and Glu99 each bind ATP. The Mg(2+) site is built by Asn191 and Asp204. Residues Asn255 and 312-314 (GIT) contribute to the substrate site.

Belongs to the succinate/malate CoA ligase beta subunit family. Heterotetramer of two alpha and two beta subunits. Mg(2+) is required as a cofactor.

The enzyme catalyses succinate + ATP + CoA = succinyl-CoA + ADP + phosphate. It carries out the reaction GTP + succinate + CoA = succinyl-CoA + GDP + phosphate. The protein operates within carbohydrate metabolism; tricarboxylic acid cycle; succinate from succinyl-CoA (ligase route): step 1/1. In terms of biological role, succinyl-CoA synthetase functions in the citric acid cycle (TCA), coupling the hydrolysis of succinyl-CoA to the synthesis of either ATP or GTP and thus represents the only step of substrate-level phosphorylation in the TCA. The beta subunit provides nucleotide specificity of the enzyme and binds the substrate succinate, while the binding sites for coenzyme A and phosphate are found in the alpha subunit. This Archaeoglobus fulgidus (strain ATCC 49558 / DSM 4304 / JCM 9628 / NBRC 100126 / VC-16) protein is Succinate--CoA ligase [ADP-forming] subunit beta 2.